The following is a 477-amino-acid chain: ATP synthase subunit beta (477 aa).

163–170 provides a ligand contact to ATP; it reads GGAGVGKT.

It belongs to the ATPase alpha/beta chains family. As to quaternary structure, F-type ATPases have 2 components, CF(1) - the catalytic core - and CF(0) - the membrane proton channel. CF(1) has five subunits: alpha(3), beta(3), gamma(1), delta(1), epsilon(1). CF(0) has four main subunits: a(1), b(1), b'(1) and c(9-12).

It is found in the cellular thylakoid membrane. It catalyses the reaction ATP + H2O + 4 H(+)(in) = ADP + phosphate + 5 H(+)(out). Its function is as follows. Produces ATP from ADP in the presence of a proton gradient across the membrane. The catalytic sites are hosted primarily by the beta subunits. The protein is ATP synthase subunit beta of Synechococcus sp. (strain JA-3-3Ab) (Cyanobacteria bacterium Yellowstone A-Prime).